Here is a 293-residue protein sequence, read N- to C-terminus: 4-diphosphocytidyl-2-C-methyl-D-erythritol kinase (293 aa).

Lys10 is an active-site residue. 96 to 106 (PVASGIGGGSS) serves as a coordination point for ATP. The active site involves Asp138.

Belongs to the GHMP kinase family. IspE subfamily.

It catalyses the reaction 4-CDP-2-C-methyl-D-erythritol + ATP = 4-CDP-2-C-methyl-D-erythritol 2-phosphate + ADP + H(+). Its pathway is isoprenoid biosynthesis; isopentenyl diphosphate biosynthesis via DXP pathway; isopentenyl diphosphate from 1-deoxy-D-xylulose 5-phosphate: step 3/6. Catalyzes the phosphorylation of the position 2 hydroxy group of 4-diphosphocytidyl-2C-methyl-D-erythritol. This is 4-diphosphocytidyl-2-C-methyl-D-erythritol kinase from Chelativorans sp. (strain BNC1).